Consider the following 346-residue polypeptide: NADH-ubiquinone oxidoreductase chain 2 (346 aa).

A run of 10 helical transmembrane segments spans residues 25-45 (HWVLAWTGLEINTLAIIPLIS), 60-80 (FLTQAAASALVLFSSMTNAWA), 95-115 (CLLLTAAIAIKLGLVPFHFWF), 124-144 (LMTALLLSTLMKFPPLTLLLM), 149-169 (LNPALLTAMALASTALGGWMG), 178-195 (ILAFSSISHLGWIAIILV), 200-219 (LALLTFYLYTIMTSAVFMAL), 247-267 (VLLSLAGLPPLTGFMPKWLII), 274-294 (EMTPAAMAIAMLSLLSLFFYL), and 326-346 (AILASLSILLLPLSPMVHAIV).

The protein belongs to the complex I subunit 2 family.

The protein localises to the mitochondrion inner membrane. It catalyses the reaction a ubiquinone + NADH + 5 H(+)(in) = a ubiquinol + NAD(+) + 4 H(+)(out). Its function is as follows. Core subunit of the mitochondrial membrane respiratory chain NADH dehydrogenase (Complex I) that is believed to belong to the minimal assembly required for catalysis. Complex I functions in the transfer of electrons from NADH to the respiratory chain. The immediate electron acceptor for the enzyme is believed to be ubiquinone. This Anas capensis (Cape teal) protein is NADH-ubiquinone oxidoreductase chain 2 (MT-ND2).